The sequence spans 513 residues: Activin receptor type-2A (513 aa).

The N-terminal stretch at 1-19 is a signal peptide; the sequence is MGAAAKLAFAVFLISCSSG. Residues 20–135 lie on the Extracellular side of the membrane; it reads AILGRSETQE…TSNPVTPKPP (116 aa). 5 cysteine pairs are disulfide-bonded: C30/C60, C50/C78, C85/C104, C91/C103, and C105/C110. Residues N43 and N66 are each glycosylated (N-linked (GlcNAc...) asparagine). The chain crosses the membrane as a helical span at residues 136-161; the sequence is YYNILLYSLVPLMLIAGIVICAFWVY. The Cytoplasmic segment spans residues 162-513; it reads RHHKMAYPPV…VDFPPKESSL (352 aa). A Protein kinase domain is found at 192–485; sequence LQLLEVKARG…GERITQMQRL (294 aa). ATP contacts are provided by residues 198 to 206 and K219; that span reads KARGRFGCV. The Proton acceptor role is filled by D322.

It belongs to the protein kinase superfamily. TKL Ser/Thr protein kinase family. TGFB receptor subfamily. Part of a complex consisting of MAGI2/ARIP1, ACVR2A, ACVR1B and SMAD3. Interacts with MAGI2/ARIP1. Interacts with type I receptor ACVR1. Interacts with BMP7. Interacts with TSC22D1/TSC-22. Interacts with activin A/INHBA. It depends on Mg(2+) as a cofactor. Requires Mn(2+) as cofactor. In terms of tissue distribution, brain, testis, intestine, liver and kidney.

The protein localises to the cell membrane. It catalyses the reaction L-threonyl-[receptor-protein] + ATP = O-phospho-L-threonyl-[receptor-protein] + ADP + H(+). The enzyme catalyses L-seryl-[receptor-protein] + ATP = O-phospho-L-seryl-[receptor-protein] + ADP + H(+). In terms of biological role, on ligand binding, forms a receptor complex consisting of two type II and two type I transmembrane serine/threonine kinases. Type II receptors phosphorylate and activate type I receptors which autophosphorylate, then bind and activate SMAD transcriptional regulators. Receptor for activin A, activin B and inhibin A. Mediates induction of adipogenesis by GDF6. In Mus musculus (Mouse), this protein is Activin receptor type-2A.